Here is a 372-residue protein sequence, read N- to C-terminus: tRNA-specific 2-thiouridylase MnmA (372 aa).

Residues 16 to 23 (GMSGGVDS) and Met-42 each bind ATP. The segment at 102–104 (NPD) is interaction with target base in tRNA. The active-site Nucleophile is Cys-107. Cys-107 and Cys-205 form a disulfide bridge. Position 132 (Gly-132) interacts with ATP. The segment at 155-157 (KDQ) is interaction with tRNA. Cys-205 acts as the Cysteine persulfide intermediate in catalysis. The segment at 317 to 318 (RY) is interaction with tRNA.

It belongs to the MnmA/TRMU family.

The protein localises to the cytoplasm. The catalysed reaction is S-sulfanyl-L-cysteinyl-[protein] + uridine(34) in tRNA + AH2 + ATP = 2-thiouridine(34) in tRNA + L-cysteinyl-[protein] + A + AMP + diphosphate + H(+). Catalyzes the 2-thiolation of uridine at the wobble position (U34) of tRNA, leading to the formation of s(2)U34. The chain is tRNA-specific 2-thiouridylase MnmA from Shewanella sp. (strain MR-7).